A 261-amino-acid chain; its full sequence is Proteasome subunit alpha (261 aa).

A disordered region spans residues Asn-242 to Glu-261.

Belongs to the peptidase T1A family. The 20S proteasome core is composed of 14 alpha and 14 beta subunits that assemble into four stacked heptameric rings, resulting in a barrel-shaped structure. The two inner rings, each composed of seven catalytic beta subunits, are sandwiched by two outer rings, each composed of seven alpha subunits. The catalytic chamber with the active sites is on the inside of the barrel. Has a gated structure, the ends of the cylinder being occluded by the N-termini of the alpha-subunits. Is capped at one or both ends by the proteasome regulatory ATPase, PAN.

It is found in the cytoplasm. With respect to regulation, the formation of the proteasomal ATPase PAN-20S proteasome complex, via the docking of the C-termini of PAN into the intersubunit pockets in the alpha-rings, triggers opening of the gate for substrate entry. Interconversion between the open-gate and close-gate conformations leads to a dynamic regulation of the 20S proteasome proteolysis activity. Component of the proteasome core, a large protease complex with broad specificity involved in protein degradation. The M.jannaschii proteasome is able to cleave oligopeptides after Glu, Asp, Tyr, Phe, Trp, slightly after Arg, but not after Ala. Thus, displays caspase-like and chymotrypsin-like activities and low level of trypsin-like activity. The sequence is that of Proteasome subunit alpha from Methanocaldococcus jannaschii (strain ATCC 43067 / DSM 2661 / JAL-1 / JCM 10045 / NBRC 100440) (Methanococcus jannaschii).